The chain runs to 239 residues: tRNA uridine(34) hydroxylase (239 aa).

Positions 124 to 214 (QGRELVMLDT…GILKYFEETD (91 aa)) constitute a Rhodanese domain. Cys178 serves as the catalytic Cysteine persulfide intermediate.

Belongs to the TrhO family.

It catalyses the reaction uridine(34) in tRNA + AH2 + O2 = 5-hydroxyuridine(34) in tRNA + A + H2O. In terms of biological role, catalyzes oxygen-dependent 5-hydroxyuridine (ho5U) modification at position 34 in tRNAs. This chain is tRNA uridine(34) hydroxylase, found in Bordetella parapertussis (strain 12822 / ATCC BAA-587 / NCTC 13253).